The chain runs to 593 residues: Glucose-6-phosphate 1-dehydrogenase, chloroplastic (593 aa).

Residues 116-123 (GASGDLAK) and Arg-150 contribute to the NADP(+) site. A disulfide bridge connects residues Cys-168 and Cys-176. Lys-253 serves as a coordination point for NADP(+). D-glucose 6-phosphate contacts are provided by residues Lys-253, 283–287 (HYLGK), Glu-321, and Asp-340. His-345 functions as the Proton acceptor in the catalytic mechanism. Lys-438 is a binding site for NADP(+). D-glucose 6-phosphate contacts are provided by Lys-441 and Arg-446. Residues Arg-451 and Arg-480 each coordinate NADP(+). Gln-482 contacts D-glucose 6-phosphate. NADP(+) contacts are provided by residues 488 to 490 (YLK) and Arg-573.

This sequence belongs to the glucose-6-phosphate dehydrogenase family. In terms of assembly, homodimer.

It is found in the plastid. The protein resides in the chloroplast. The enzyme catalyses D-glucose 6-phosphate + NADP(+) = 6-phospho-D-glucono-1,5-lactone + NADPH + H(+). It functions in the pathway carbohydrate degradation; pentose phosphate pathway; D-ribulose 5-phosphate from D-glucose 6-phosphate (oxidative stage): step 1/3. With respect to regulation, regulated by metabolites. Post-translationally inactivated by cysteine-mediated redox modification via the ferredoxin-thioredoxin system in the light and this avoids futile cycles with photosynthetic CO2 fixation. Catalyzes the rate-limiting step of the oxidative pentose-phosphate pathway, which represents a route for the dissimilation of carbohydrates besides glycolysis. The main function of this enzyme is to provide reducing power (NADPH) and pentose phosphates for fatty acid and nucleic acid synthesis which are involved in membrane synthesis and cell division. This is Glucose-6-phosphate 1-dehydrogenase, chloroplastic from Nicotiana tabacum (Common tobacco).